The primary structure comprises 524 residues: Homeobox protein engrailed-like SMOX-2 (524 aa).

The segment at 194 to 218 (SSSSSSSSSSSSSSSSSSCSTNSSS) is disordered. The segment at residues 423–482 (LKRPRTSFTVPQLKRLSQEFEKNRYLDELRRKKLATELDLRESQVKIWFQNKRAKTKKAS) is a DNA-binding region (homeobox).

It belongs to the engrailed homeobox family.

It is found in the nucleus. The polypeptide is Homeobox protein engrailed-like SMOX-2 (SMOX-2) (Schistosoma mansoni (Blood fluke)).